Consider the following 208-residue polypeptide: Large ribosomal subunit protein uL3 (208 aa).

The disordered stretch occupies residues 116-146; that stretch reads GFQGAIKRHGQSRGPMAHGSRYHRRPGSMGP.

Belongs to the universal ribosomal protein uL3 family. As to quaternary structure, part of the 50S ribosomal subunit. Forms a cluster with proteins L14 and L19.

Functionally, one of the primary rRNA binding proteins, it binds directly near the 3'-end of the 23S rRNA, where it nucleates assembly of the 50S subunit. The chain is Large ribosomal subunit protein uL3 from Streptococcus mutans serotype c (strain ATCC 700610 / UA159).